Consider the following 110-residue polypeptide: uncharacterized protein (110 aa).

Positions Met1–Asp16 are enriched in basic and acidic residues. Disordered stretches follow at residues Met1 to Asn29 and Ile73 to Asn100. Residues Gly20 to Asn29 show a composition bias toward low complexity.

This is an uncharacterized protein from Dictyostelium discoideum (Social amoeba).